Reading from the N-terminus, the 473-residue chain is Photosystem II CP43 reaction center protein (473 aa).

Positions 1–14 (MKTLYSLRRFYHVE) are excised as a propeptide. Threonine 15 carries the N-acetylthreonine modification. Phosphothreonine is present on threonine 15. A run of 5 helical transmembrane segments spans residues 69 to 93 (LFEVAHFVPEKPMYEQGLILLPHLA), 134 to 155 (LLGPETLEESFPFFGYVWKDRN), 178 to 200 (KAFYFGGIYDTWAPGGGDVRKIT), 255 to 275 (KPFAWARRALVWSGEAYLSYS), and 291 to 312 (WFNNTAYPSEFYGPTGPEASQA). Glutamate 367 lines the [CaMn4O5] cluster pocket. Residues 447-471 (RARAAAAGFEKGIDRDFEPVLSMTP) traverse the membrane as a helical segment.

Belongs to the PsbB/PsbC family. PsbC subfamily. PSII is composed of 1 copy each of membrane proteins PsbA, PsbB, PsbC, PsbD, PsbE, PsbF, PsbH, PsbI, PsbJ, PsbK, PsbL, PsbM, PsbT, PsbX, PsbY, PsbZ, Psb30/Ycf12, at least 3 peripheral proteins of the oxygen-evolving complex and a large number of cofactors. It forms dimeric complexes. Requires Binds multiple chlorophylls and provides some of the ligands for the Ca-4Mn-5O cluster of the oxygen-evolving complex. It may also provide a ligand for a Cl- that is required for oxygen evolution. PSII binds additional chlorophylls, carotenoids and specific lipids. as cofactor.

Its subcellular location is the plastid. The protein resides in the chloroplast thylakoid membrane. Functionally, one of the components of the core complex of photosystem II (PSII). It binds chlorophyll and helps catalyze the primary light-induced photochemical processes of PSII. PSII is a light-driven water:plastoquinone oxidoreductase, using light energy to abstract electrons from H(2)O, generating O(2) and a proton gradient subsequently used for ATP formation. This is Photosystem II CP43 reaction center protein from Pisum sativum (Garden pea).